The chain runs to 89 residues: Small ribosomal subunit protein bS18 (89 aa).

The protein belongs to the bacterial ribosomal protein bS18 family. As to quaternary structure, part of the 30S ribosomal subunit. Forms a tight heterodimer with protein bS6.

In terms of biological role, binds as a heterodimer with protein bS6 to the central domain of the 16S rRNA, where it helps stabilize the platform of the 30S subunit. The sequence is that of Small ribosomal subunit protein bS18 from Parabacteroides distasonis (strain ATCC 8503 / DSM 20701 / CIP 104284 / JCM 5825 / NCTC 11152).